The sequence spans 336 residues: uncharacterized protein (336 aa).

This is an uncharacterized protein from Alkalihalophilus pseudofirmus (strain ATCC BAA-2126 / JCM 17055 / OF4) (Bacillus pseudofirmus).